The chain runs to 332 residues: DNA-directed RNA polymerase subunit alpha (332 aa).

The alpha N-terminal domain (alpha-NTD) stretch occupies residues 1-234 (MTVTANQVLR…DQLSVFGDFT (234 aa)). Residues 248 to 332 (VDPVLLRPID…AGVASHGMLG (85 aa)) form an alpha C-terminal domain (alpha-CTD) region.

It belongs to the RNA polymerase alpha chain family. In terms of assembly, homodimer. The RNAP catalytic core consists of 2 alpha, 1 beta, 1 beta' and 1 omega subunit. When a sigma factor is associated with the core the holoenzyme is formed, which can initiate transcription.

It catalyses the reaction RNA(n) + a ribonucleoside 5'-triphosphate = RNA(n+1) + diphosphate. Functionally, DNA-dependent RNA polymerase catalyzes the transcription of DNA into RNA using the four ribonucleoside triphosphates as substrates. The sequence is that of DNA-directed RNA polymerase subunit alpha from Stenotrophomonas maltophilia (strain K279a).